The following is a 690-amino-acid chain: Cyclic nucleotide-gated channel alpha-1 (690 aa).

The Cytoplasmic segment spans residues Met1–Tyr163. Disordered stretches follow at residues Gly33–Arg76 and Asn88–Lys151. Residues Gly40 to Thr54 show a composition bias toward acidic residues. The segment covering Arg64–Arg76 has biased composition (polar residues). Residues Ser111–Lys151 are compositionally biased toward basic and acidic residues. Residues Tyr164 to Ala185 traverse the membrane as a helical segment. The Extracellular segment spans residues Cys186–Leu195. A helical membrane pass occupies residues Glu196–Val215. Residues Arg216–Thr241 lie on the Cytoplasmic side of the membrane. Residues Phe242–Val251 traverse the membrane as a helical segment. Over Ile252 to Asn264 the chain is Extracellular. Residues Tyr265 to Phe283 form a helical membrane-spanning segment. Residues Gln284–Asn291 are Cytoplasmic-facing. The helical transmembrane segment at Tyr292 to Val315 threads the bilayer. Residues Pro293–Asn402 are ion conduction pathway. At Tyr316 to Arg342 the chain is on the extracellular side. Asn327 carries N-linked (GlcNAc...) asparagine glycosylation. Helical transmembrane passes span Leu343 to Tyr373 and Phe374 to Ser399. The segment at Thr360–Glu363 is selectivity filter. The Cytoplasmic segment spans residues Asn400–Asp690. Residues Ala403–Ala479 are C-linker. The tract at residues Glu482–Lys603 is cyclic nucleotide-binding domain (CNBD). 4 residues coordinate 3',5'-cyclic GMP: Gly543, Ser546, Arg559, and Thr560. Residues Arg559 and Thr560 each contribute to the 3',5'-cyclic AMP site. Residues Leu621–Leu664 adopt a coiled-coil conformation.

It belongs to the cyclic nucleotide-gated cation channel (TC 1.A.1.5) family. CNGA1 subfamily. As to quaternary structure, forms a heterotetramer with CNGB1 in a 3:1 ratio. May also form cyclic nucleotide-activated homotetrameric channels, that are efficiently activated by saturating cGMP, but poorly activated by saturating cAMP compared to the heterotetramer with CNGB1. The channel binds Ca(2+)-bound CALM1 via CaM1 and CaM2 regions of the CNGB1 subunit; this interaction modulates the affinity of the channel for cNMPs in response to intracellular Ca(2+) levels. In terms of tissue distribution, expressed in the retina, in rod cells (at protein level).

It localises to the cell membrane. It carries out the reaction Ca(2+)(in) = Ca(2+)(out). The enzyme catalyses Na(+)(in) = Na(+)(out). The catalysed reaction is K(+)(in) = K(+)(out). It catalyses the reaction NH4(+)(in) = NH4(+)(out). It carries out the reaction Rb(+)(in) = Rb(+)(out). The enzyme catalyses Li(+)(in) = Li(+)(out). The catalysed reaction is Cs(+)(in) = Cs(+)(out). In terms of biological role, pore-forming subunit of the rod cyclic nucleotide-gated channel. Mediates rod photoresponses at dim light converting transient changes in intracellular cGMP levels into electrical signals. In the dark, cGMP levels are high and keep the channel open enabling a steady inward current carried by Na(+) and Ca(2+) ions that leads to membrane depolarization and neurotransmitter release from synaptic terminals. Upon photon absorption cGMP levels decline leading to channel closure and membrane hyperpolarization that ultimately slows neurotransmitter release and signals the presence of light, the end point of the phototransduction cascade. Conducts cGMP- and cAMP-gated ion currents, with permeability for monovalent and divalent cations. The selectivity for Ca(2+) over Na(+) increases with cGMP concentrations, whereas the selectivity among monovalent ions is independent of the cGMP levels. The polypeptide is Cyclic nucleotide-gated channel alpha-1 (Bos taurus (Bovine)).